The following is a 177-amino-acid chain: MSRVGKKPVTVPSGVTASVEGQTVKMKGPKGQLHFVVHDDVDVKFEDGSVKVAPRFETNRAQALYGTARAQIANLVEGVTKGFEKKLEITGVGYRAALQGKKLQLALGYSHDVIYDIPEGITITVPKPTEINVVGIDSQKVGQVAAEIRDYRPPEPYKGKGVRYSDEFIFRKEGKKK.

It belongs to the universal ribosomal protein uL6 family. Part of the 50S ribosomal subunit.

In terms of biological role, this protein binds to the 23S rRNA, and is important in its secondary structure. It is located near the subunit interface in the base of the L7/L12 stalk, and near the tRNA binding site of the peptidyltransferase center. The polypeptide is Large ribosomal subunit protein uL6 (Rhodopseudomonas palustris (strain HaA2)).